A 236-amino-acid chain; its full sequence is 2,3,4,5-tetrahydropyridine-2,6-dicarboxylate N-acetyltransferase (236 aa).

This sequence belongs to the transferase hexapeptide repeat family. DapH subfamily.

It catalyses the reaction (S)-2,3,4,5-tetrahydrodipicolinate + acetyl-CoA + H2O = L-2-acetamido-6-oxoheptanedioate + CoA. It functions in the pathway amino-acid biosynthesis; L-lysine biosynthesis via DAP pathway; LL-2,6-diaminopimelate from (S)-tetrahydrodipicolinate (acetylase route): step 1/3. In terms of biological role, catalyzes the transfer of an acetyl group from acetyl-CoA to tetrahydrodipicolinate. The sequence is that of 2,3,4,5-tetrahydropyridine-2,6-dicarboxylate N-acetyltransferase from Clostridium botulinum (strain Eklund 17B / Type B).